A 295-amino-acid polypeptide reads, in one-letter code: Protein SSO2 (295 aa).

Residues 1–269 (MSNANPYENN…ARKARKNKIR (269 aa)) lie on the Cytoplasmic side of the membrane. Phosphoserine occurs at positions 31 and 34. Residues 39 to 100 (AFMNKINSIN…ATDLQYQLKA (62 aa)) are a coiled coil. The t-SNARE coiled-coil homology domain maps to 194–256 (LAEVQARHQE…EQGVGHTNKA (63 aa)). The helical; Anchor for type IV membrane protein transmembrane segment at 270–291 (CLIICFIIFAIVVVVVVVPSVV) threads the bilayer. Topologically, residues 292 to 295 (ETRK) are extracellular.

It belongs to the syntaxin family.

It localises to the membrane. Functionally, required for vesicle fusion with the plasma membrane. This chain is Protein SSO2 (SSO2), found in Saccharomyces cerevisiae (strain ATCC 204508 / S288c) (Baker's yeast).